The sequence spans 279 residues: Large ribosomal subunit protein uL2 (279 aa).

Disordered regions lie at residues 31–61 (KSLLEPLTKSGGRNSAGRKTSRHRGGGHKRH) and 222–279 (GMAM…RNAK). The segment covering 49–61 (KTSRHRGGGHKRH) has biased composition (basic residues). The segment covering 232–242 (MGGGEGKSKSG) has biased composition (gly residues). The span at 259 to 268 (LKTRNRKKAS) shows a compositional bias: basic residues.

It belongs to the universal ribosomal protein uL2 family. In terms of assembly, part of the 50S ribosomal subunit. Forms a bridge to the 30S subunit in the 70S ribosome.

One of the primary rRNA binding proteins. Required for association of the 30S and 50S subunits to form the 70S ribosome, for tRNA binding and peptide bond formation. It has been suggested to have peptidyltransferase activity; this is somewhat controversial. Makes several contacts with the 16S rRNA in the 70S ribosome. This is Large ribosomal subunit protein uL2 from Chlorobium chlorochromatii (strain CaD3).